We begin with the raw amino-acid sequence, 460 residues long: Glucan endo-1,3-beta-D-glucosidase (460 aa).

The first 26 residues, Met-1–Ser-26, serve as a signal peptide directing secretion. The active-site Proton donor is the Glu-123. Glu-268 functions as the Nucleophile in the catalytic mechanism. A disordered region spans residues Asn-352–Ser-371. N-linked (GlcNAc...) asparagine glycosylation is present at Asn-355. The cysteines at positions 373 and 435 are disulfide-linked. N-linked (GlcNAc...) asparagine glycosylation is present at Asn-447.

The protein belongs to the glycosyl hydrolase 17 family. Homodimer. Post-translationally, glycosylated. Contains two additional disulfide bonds, but it is unclear if they are between the pairs Cys-392-Cys-398 and Cys-407-Cys-453 (PudMed:18096638) or between the pairs Cys-392-Cys-453 and Cys-398-Cys-407 (PudMed:12392450). In terms of tissue distribution, expressed only in pollen.

It is found in the secreted. It carries out the reaction Hydrolysis of (1-&gt;3)-beta-D-glucosidic linkages in (1-&gt;3)-beta-D-glucans.. This chain is Glucan endo-1,3-beta-D-glucosidase (OLE9), found in Olea europaea (Common olive).